The sequence spans 227 residues: 7-cyano-7-deazaguanine synthase (227 aa).

8–18 (VSGGADSATVL) serves as a coordination point for ATP. 4 residues coordinate Zn(2+): cysteine 192, cysteine 202, cysteine 205, and cysteine 208.

It belongs to the QueC family. It depends on Zn(2+) as a cofactor.

The enzyme catalyses 7-carboxy-7-deazaguanine + NH4(+) + ATP = 7-cyano-7-deazaguanine + ADP + phosphate + H2O + H(+). Its pathway is purine metabolism; 7-cyano-7-deazaguanine biosynthesis. Catalyzes the ATP-dependent conversion of 7-carboxy-7-deazaguanine (CDG) to 7-cyano-7-deazaguanine (preQ(0)). The sequence is that of 7-cyano-7-deazaguanine synthase from Rickettsia akari (strain Hartford).